The chain runs to 301 residues: MAPSNLPPIFNATSQDIEMLLAAQCHLGSKNLQVHMDPYLWKTRPDGINVINIGKTWEKIVLAARIIAAIDNPADVCVISARPYGQRAVLKFAAHTGAAAIAGRFTPGNFTNYITRSFKEPRLIIVTDPRTDHQAIKEASYVNIPVIALCDTDSPTEFVDVAIPTNNKGRHAIGLIWWMLAREVLRLRGTIASRETEWDVVVDLYFYRDPEAEENKEIEEAKVPGAEEVGAAAIESGLVGDSWEAQVAPAFAATGAAVPAGAAPGWEAEAAGEWAASSGAAAGAAETWATDTAAPDAGVKW.

It belongs to the universal ribosomal protein uS2 family. Component of the small ribosomal subunit. Mature ribosomes consist of a small (40S) and a large (60S) subunit. The 40S subunit contains about 33 different proteins and 1 molecule of RNA (18S). The 60S subunit contains about 49 different proteins and 3 molecules of RNA (25S, 5.8S and 5S). Interacts with RPS21.

Its subcellular location is the cytoplasm. Functionally, required for the assembly and/or stability of the 40S ribosomal subunit. Required for the processing of the 20S rRNA-precursor to mature 18S rRNA in a late step of the maturation of 40S ribosomal subunits. This Ajellomyces dermatitidis (strain ER-3 / ATCC MYA-2586) (Blastomyces dermatitidis) protein is Small ribosomal subunit protein uS2.